The chain runs to 238 residues: Female-specific protein 800 (238 aa).

Residues 35-50 (YSYHHTYNNNNQGNYQ) are compositionally biased toward low complexity. Disordered regions lie at residues 35 to 112 (YSYH…KGGS) and 166 to 204 (NKRKITKSEKNGRYIKKDHMNNRDSNTNINEKPEYSKSP). The segment covering 97 to 106 (RNDQIQSRGN) has biased composition (polar residues). The span at 171–187 (TKSEKNGRYIKKDHMNN) shows a compositional bias: basic and acidic residues.

Functionally, FS800 is likely to have some function in the production or maintenance of the schistosome egg. This chain is Female-specific protein 800, found in Schistosoma mansoni (Blood fluke).